The following is a 1194-amino-acid chain: Rho-associated protein kinase let-502 (1194 aa).

Residues 68–330 form the Protein kinase domain; the sequence is FRQLKVIGRG…VDEIRNHKFF (263 aa). Residues 74–82 and lysine 97 contribute to the ATP site; that span reads IGRGAFGEV. Aspartate 190 (proton acceptor) is an active-site residue. The region spanning 331–402 is the AGC-kinase C-terminal domain; that stretch reads KNDEWTFETL…SNEYSPVKKL (72 aa). Coiled coils occupy residues 436–844 and 875–933; these read EEQY…MAKR and GRIL…EYPQ. Positions 784 to 846 constitute a RhoBD domain; that stretch reads EQNLKHIENQ…LEEEMAKRQP (63 aa). Residues 961–1171 enclose the PH domain; the sequence is IQIDGWLSLR…SQLRRFIEAS (211 aa). The Phorbol-ester/DAG-type zinc finger occupies 1085–1138; it reads RHDFQELSYHTRTYCDDCGKKLSDFIRPTPAFECKNCHYKTHKEHIAQGTITMC.

Belongs to the protein kinase superfamily. AGC Ser/Thr protein kinase family. As to quaternary structure, interacts with rho-1. Mg(2+) serves as cofactor.

The protein resides in the cytoplasm. The protein localises to the cytoskeleton. Its subcellular location is the cleavage furrow. It catalyses the reaction L-seryl-[protein] + ATP = O-phospho-L-seryl-[protein] + ADP + H(+). The enzyme catalyses L-threonyl-[protein] + ATP = O-phospho-L-threonyl-[protein] + ADP + H(+). Its activity is regulated as follows. Activated by rho-1 binding. Functionally, negatively regulates mel-11 to relieve the inhibition of mlc-4, allowing contraction of the circumferentially oriented microfilaments in epidermal cells and thereby regulating myosin II contractility during spermathecal contraction, cleavage furrow contraction in early embryos, and embryonic elongation and morphogenesis. Required for P-cell migration. May also play a role in oocyte cellularization. In Caenorhabditis briggsae, this protein is Rho-associated protein kinase let-502.